Reading from the N-terminus, the 143-residue chain is Large ribosomal subunit protein uL16 (143 aa).

The span at 1–17 shows a compositional bias: basic residues; it reads MLQPKKTKFRRSQKGRM. The segment at 1-25 is disordered; it reads MLQPKKTKFRRSQKGRMKGNAQRGN.

The protein belongs to the universal ribosomal protein uL16 family. Part of the 50S ribosomal subunit.

Functionally, binds 23S rRNA and is also seen to make contacts with the A and possibly P site tRNAs. This Azobacteroides pseudotrichonymphae genomovar. CFP2 protein is Large ribosomal subunit protein uL16.